A 335-amino-acid chain; its full sequence is Ketol-acid reductoisomerase (NADP(+)) (335 aa).

A KARI N-terminal Rossmann domain is found at 5–185 (SKIYTDKDSN…GATRAGVIPT (181 aa)). Residues 28 to 31 (YGSQ), S56, and 86 to 89 (DMVQ) each bind NADP(+). H111 is an active-site residue. G137 contacts NADP(+). The KARI C-terminal knotted domain maps to 186 to 331 (TFKEETETDL…NQLKDLIQKG (146 aa)). Mg(2+) contacts are provided by D194, E198, E230, and E234. S255 is a substrate binding site.

It belongs to the ketol-acid reductoisomerase family. Requires Mg(2+) as cofactor.

The catalysed reaction is (2R)-2,3-dihydroxy-3-methylbutanoate + NADP(+) = (2S)-2-acetolactate + NADPH + H(+). It catalyses the reaction (2R,3R)-2,3-dihydroxy-3-methylpentanoate + NADP(+) = (S)-2-ethyl-2-hydroxy-3-oxobutanoate + NADPH + H(+). It functions in the pathway amino-acid biosynthesis; L-isoleucine biosynthesis; L-isoleucine from 2-oxobutanoate: step 2/4. It participates in amino-acid biosynthesis; L-valine biosynthesis; L-valine from pyruvate: step 2/4. Functionally, involved in the biosynthesis of branched-chain amino acids (BCAA). Catalyzes an alkyl-migration followed by a ketol-acid reduction of (S)-2-acetolactate (S2AL) to yield (R)-2,3-dihydroxy-isovalerate. In the isomerase reaction, S2AL is rearranged via a Mg-dependent methyl migration to produce 3-hydroxy-3-methyl-2-ketobutyrate (HMKB). In the reductase reaction, this 2-ketoacid undergoes a metal-dependent reduction by NADPH to yield (R)-2,3-dihydroxy-isovalerate. The sequence is that of Ketol-acid reductoisomerase (NADP(+)) from Saccharolobus islandicus (strain L.S.2.15 / Lassen #1) (Sulfolobus islandicus).